The chain runs to 427 residues: Histidine--tRNA ligase (427 aa).

This sequence belongs to the class-II aminoacyl-tRNA synthetase family. In terms of assembly, homodimer.

The protein localises to the cytoplasm. It carries out the reaction tRNA(His) + L-histidine + ATP = L-histidyl-tRNA(His) + AMP + diphosphate + H(+). The sequence is that of Histidine--tRNA ligase from Deinococcus radiodurans (strain ATCC 13939 / DSM 20539 / JCM 16871 / CCUG 27074 / LMG 4051 / NBRC 15346 / NCIMB 9279 / VKM B-1422 / R1).